A 256-amino-acid polypeptide reads, in one-letter code: Type III pantothenate kinase (256 aa).

Position 6 to 13 (6 to 13 (DVGNTNTV)) interacts with ATP. Substrate contacts are provided by residues Y100 and 107 to 110 (GADR). D109 serves as the catalytic Proton acceptor. D129 provides a ligand contact to K(+). Residue T132 coordinates ATP. T184 provides a ligand contact to substrate.

It belongs to the type III pantothenate kinase family. In terms of assembly, homodimer. NH4(+) serves as cofactor. It depends on K(+) as a cofactor.

Its subcellular location is the cytoplasm. The enzyme catalyses (R)-pantothenate + ATP = (R)-4'-phosphopantothenate + ADP + H(+). It participates in cofactor biosynthesis; coenzyme A biosynthesis; CoA from (R)-pantothenate: step 1/5. Functionally, catalyzes the phosphorylation of pantothenate (Pan), the first step in CoA biosynthesis. This Myxococcus xanthus (strain DK1622) protein is Type III pantothenate kinase.